The following is an 81-amino-acid chain: UPF0180 protein RBAM_013970 (81 aa).

It belongs to the UPF0180 family.

This is UPF0180 protein RBAM_013970 from Bacillus velezensis (strain DSM 23117 / BGSC 10A6 / LMG 26770 / FZB42) (Bacillus amyloliquefaciens subsp. plantarum).